A 288-amino-acid chain; its full sequence is ATP phosphoribosyltransferase (288 aa).

The protein belongs to the ATP phosphoribosyltransferase family. Long subfamily. Mg(2+) serves as cofactor.

The protein resides in the cytoplasm. The catalysed reaction is 1-(5-phospho-beta-D-ribosyl)-ATP + diphosphate = 5-phospho-alpha-D-ribose 1-diphosphate + ATP. It functions in the pathway amino-acid biosynthesis; L-histidine biosynthesis; L-histidine from 5-phospho-alpha-D-ribose 1-diphosphate: step 1/9. Feedback inhibited by histidine. Functionally, catalyzes the condensation of ATP and 5-phosphoribose 1-diphosphate to form N'-(5'-phosphoribosyl)-ATP (PR-ATP). Has a crucial role in the pathway because the rate of histidine biosynthesis seems to be controlled primarily by regulation of HisG enzymatic activity. The protein is ATP phosphoribosyltransferase of Methanococcus maripaludis (strain DSM 14266 / JCM 13030 / NBRC 101832 / S2 / LL).